Consider the following 241-residue polypeptide: ATP synthase subunit a (241 aa).

The next 7 helical transmembrane spans lie at 27–47, 52–72, 87–107, 112–132, 142–162, 175–195, and 198–218; these read NCSL…CWAL, VVPG…ANTL, VMTT…PFGF, HLSV…VIGF, IFLP…IKLF, LAAN…FVLK, and LVLA…EIFV.

It belongs to the ATPase A chain family. As to quaternary structure, F-type ATPases have 2 components, CF(1) - the catalytic core - and CF(0) - the membrane proton channel. CF(1) has five subunits: alpha(3), beta(3), gamma(1), delta(1), epsilon(1). CF(0) has three main subunits: a(1), b(2) and c(9-12). The alpha and beta chains form an alternating ring which encloses part of the gamma chain. CF(1) is attached to CF(0) by a central stalk formed by the gamma and epsilon chains, while a peripheral stalk is formed by the delta and b chains.

It is found in the cell inner membrane. In terms of biological role, key component of the proton channel; it plays a direct role in the translocation of protons across the membrane. This Anaplasma marginale (strain St. Maries) protein is ATP synthase subunit a.